A 301-amino-acid polypeptide reads, in one-letter code: 4-hydroxy-tetrahydrodipicolinate synthase (301 aa).

Pyruvate is bound at residue Thr-50. The Proton donor/acceptor role is filled by Tyr-138. Lys-167 serves as the catalytic Schiff-base intermediate with substrate. Ile-209 contacts pyruvate.

This sequence belongs to the DapA family. Homotetramer; dimer of dimers.

It localises to the cytoplasm. The catalysed reaction is L-aspartate 4-semialdehyde + pyruvate = (2S,4S)-4-hydroxy-2,3,4,5-tetrahydrodipicolinate + H2O + H(+). Its pathway is amino-acid biosynthesis; L-lysine biosynthesis via DAP pathway; (S)-tetrahydrodipicolinate from L-aspartate: step 3/4. Its function is as follows. Catalyzes the condensation of (S)-aspartate-beta-semialdehyde [(S)-ASA] and pyruvate to 4-hydroxy-tetrahydrodipicolinate (HTPA). The chain is 4-hydroxy-tetrahydrodipicolinate synthase from Sorangium cellulosum (strain So ce56) (Polyangium cellulosum (strain So ce56)).